Reading from the N-terminus, the 256-residue chain is Thiazole synthase (256 aa).

Lys-95 functions as the Schiff-base intermediate with DXP in the catalytic mechanism. 1-deoxy-D-xylulose 5-phosphate-binding positions include Gly-156, 182–183, and 204–205; these read AG and NT.

This sequence belongs to the ThiG family. In terms of assembly, homotetramer. Forms heterodimers with either ThiH or ThiS.

It is found in the cytoplasm. The enzyme catalyses [ThiS sulfur-carrier protein]-C-terminal-Gly-aminoethanethioate + 2-iminoacetate + 1-deoxy-D-xylulose 5-phosphate = [ThiS sulfur-carrier protein]-C-terminal Gly-Gly + 2-[(2R,5Z)-2-carboxy-4-methylthiazol-5(2H)-ylidene]ethyl phosphate + 2 H2O + H(+). The protein operates within cofactor biosynthesis; thiamine diphosphate biosynthesis. In terms of biological role, catalyzes the rearrangement of 1-deoxy-D-xylulose 5-phosphate (DXP) to produce the thiazole phosphate moiety of thiamine. Sulfur is provided by the thiocarboxylate moiety of the carrier protein ThiS. In vitro, sulfur can be provided by H(2)S. The protein is Thiazole synthase of Escherichia coli O157:H7.